The chain runs to 266 residues: Hydroxyethylthiazole kinase (266 aa).

Met-46 is a binding site for substrate. Lys-122 and Thr-166 together coordinate ATP. Gly-193 contacts substrate.

Belongs to the Thz kinase family. The cofactor is Mg(2+).

The catalysed reaction is 5-(2-hydroxyethyl)-4-methylthiazole + ATP = 4-methyl-5-(2-phosphooxyethyl)-thiazole + ADP + H(+). It functions in the pathway cofactor biosynthesis; thiamine diphosphate biosynthesis; 4-methyl-5-(2-phosphoethyl)-thiazole from 5-(2-hydroxyethyl)-4-methylthiazole: step 1/1. In terms of biological role, catalyzes the phosphorylation of the hydroxyl group of 4-methyl-5-beta-hydroxyethylthiazole (THZ). The protein is Hydroxyethylthiazole kinase of Caldivirga maquilingensis (strain ATCC 700844 / DSM 13496 / JCM 10307 / IC-167).